Here is a 543-residue protein sequence, read N- to C-terminus: Biotinidase (543 aa).

Positions 1-41 (MAHAHIQGGRRAKSRFVVCIMSGARSKLALFLCGCYVVALG) are cleaved as a signal peptide. The region spanning 72-351 (NPLALISRQE…VGLIGAENAT (280 aa)) is the CN hydrolase domain. Residue E112 is the Proton acceptor of the active site. N-linked (GlcNAc...) asparagine glycosylation occurs at N119. N-linked (GlcNAc...) (complex) asparagine glycosylation occurs at N150. N203 carries an N-linked (GlcNAc...) asparagine glycan. The active-site Proton donor is the K212. The Nucleophile role is filled by C245. 3 N-linked (GlcNAc...) asparagine glycosylation sites follow: N349, N402, and N489.

Belongs to the carbon-nitrogen hydrolase superfamily. BTD/VNN family.

The protein localises to the secreted. It localises to the extracellular space. It catalyses the reaction biocytin + H2O = biotin + L-lysine. It carries out the reaction biotin amide + H2O = biotin + NH4(+). In terms of biological role, catalytic release of biotin from biocytin, the product of biotin-dependent carboxylases degradation. The protein is Biotinidase of Homo sapiens (Human).